A 495-amino-acid chain; its full sequence is Lysine--tRNA ligase (495 aa).

Residues Glu-406 and Glu-413 each contribute to the Mg(2+) site.

Belongs to the class-II aminoacyl-tRNA synthetase family. In terms of assembly, homodimer. Requires Mg(2+) as cofactor.

It localises to the cytoplasm. The catalysed reaction is tRNA(Lys) + L-lysine + ATP = L-lysyl-tRNA(Lys) + AMP + diphosphate. The protein is Lysine--tRNA ligase of Staphylococcus saprophyticus subsp. saprophyticus (strain ATCC 15305 / DSM 20229 / NCIMB 8711 / NCTC 7292 / S-41).